A 393-amino-acid polypeptide reads, in one-letter code: Bifunctional chrysanthemol synthase, chloroplastic (393 aa).

Low complexity predominate over residues 1 to 18 (MACSSSLSSKWASWGASS). The disordered stretch occupies residues 1-22 (MACSSSLSSKWASWGASSRPHP). The N-terminal 53 residues, 1 to 53 (MACSSSLSSKWASWGASSRPHPSVQPFVTRKNVVRYHKPTSELSYSPLTTTLS), are a transit peptide targeting the chloroplast. Positions 99, 102, and 137 each coordinate dimethylallyl diphosphate. 2 residues coordinate Mg(2+): aspartate 144 and aspartate 148. Dimethylallyl diphosphate contacts are provided by arginine 153, arginine 154, lysine 241, glutamine 280, aspartate 287, lysine 297, and lysine 306.

This sequence belongs to the FPP/GGPP synthase family. Mg(2+) serves as cofactor. Restricted to glandular trichomes during achene maturation. Expressed in flowers and in both ray and disk florets.

The protein localises to the plastid. It localises to the chloroplast. It catalyses the reaction 2 dimethylallyl diphosphate = (R,R)-chrysanthemyl diphosphate + diphosphate. It carries out the reaction (R,R)-chrysanthemyl diphosphate + H2O = (R,R)-chrysanthemol + diphosphate. The enzyme catalyses (R)-lavandulyl diphosphate + H2O = (R)-lavandulol + diphosphate. The protein operates within isoprenoid biosynthesis. Its function is as follows. Component of the monoterpenoid pyrethrins biosynthesis; pyrethrins are widely used plant-derived pesticide. Catalyzes the condensation of two molecules of dimethylallyl diphosphate to produce chrysanthemyl diphosphate (CPP), a monoterpene with a non-head-to-tail or irregular c1'-2-3 linkage between isoprenoid units. In a second step, hydrolyzes the diphosphate moiety of CPP to form chrysanthemol. With a lower efficiency, can also converts dimethylallyl diphosphate into lavandulyl diphosphate (LPP), and subsequently LPP into lavandulol. In Tanacetum cinerariifolium (Dalmatian daisy), this protein is Bifunctional chrysanthemol synthase, chloroplastic.